The following is a 622-amino-acid chain: MKENEDEINKTDEKYKIKNPSNNGNNKNKNNNNNNNNNNNNNNNNNNNNNNNNNNNNNGNSNLENIEGLNKYNIYKKKKGKNESNTSLNNIYISSPNLSERSDNSIGSYCTNKTMKSENSIINIETLFRDSVSEQNSDECGSKVDKDLDEDDDDDDDETEVPELVDYSEMIVSILYPVCITMVIVVLAIRAISSSTSKNSQIVEISNDNSGGNGDSSSGADKMVFDSVVNSLIFLAVIILSTTIMVVLYKFKLMKALYAWLMGTSILLLGVFGGFLFLILLAYLNLGLDYVTFVIVVWNFSVGGIVCIFWYSPKLLNQGYLISISVLMALFFSRLPDWTTWGILSIVSIYDIFAVLCPGGPLRILIETAQKRNENIPAMIYNASIYIGMIYNEDNLENNNNNNNNNNIELNINEVDIENNNNNEDENKNNTEDGNNNNNKNKNNNNNNNNRIENENGAENSSENGSITPPPTIPNFIKDEKEINRSSGSNGFPNFKKCANDNILIGDAETNDEIVSNAESSIDSTISESYVKPKQSIRLGLGDFVFYSVLIGKAASYQITTVFTVFIAIITGLFLTLILLAVFRRALPALPMSIIFGIIVFFLTFKILIQYIYFLGENQIFV.

The segment covering 1-16 has biased composition (basic and acidic residues); sequence MKENEDEINKTDEKYK. 2 disordered regions span residues 1 to 65 and 132 to 160; these read MKEN…NLEN and VSEQNSDECGSKVDKDLDEDDDDDDDETE. Residues 1 to 168 lie on the Cytoplasmic side of the membrane; it reads MKENEDEINK…TEVPELVDYS (168 aa). Low complexity predominate over residues 21–62; that stretch reads SNNGNNKNKNNNNNNNNNNNNNNNNNNNNNNNNNNNNNGNSN. Over residues 147–160 the composition is skewed to acidic residues; the sequence is DLDEDDDDDDDETE. Residues 169–189 traverse the membrane as a helical segment; sequence EMIVSILYPVCITMVIVVLAI. The Lumenal portion of the chain corresponds to 190–227; sequence RAISSSTSKNSQIVEISNDNSGGNGDSSSGADKMVFDS. A helical membrane pass occupies residues 228 to 248; sequence VVNSLIFLAVIILSTTIMVVL. Topologically, residues 249–265 are cytoplasmic; it reads YKFKLMKALYAWLMGTS. The helical transmembrane segment at 266-286 threads the bilayer; that stretch reads ILLLGVFGGFLFLILLAYLNL. Over 287-289 the chain is Lumenal; sequence GLD. Residues 290–310 traverse the membrane as a helical segment; that stretch reads YVTFVIVVWNFSVGGIVCIFW. Residue Tyr-311 is a topological domain, cytoplasmic. The chain crosses the membrane as a helical span at residues 312–332; sequence SPKLLNQGYLISISVLMALFF. At 333 to 341 the chain is on the lumenal side; the sequence is SRLPDWTTW. Residues 342 to 362 traverse the membrane as a helical segment; sequence GILSIVSIYDIFAVLCPGGPL. Asp-351 is a catalytic residue. Topologically, residues 363 to 538 are cytoplasmic; it reads RILIETAQKR…SYVKPKQSIR (176 aa). Residues 419–477 form a disordered region; that stretch reads NNNNNEDENKNNTEDGNNNNNKNKNNNNNNNNRIENENGAENSSENGSITPPPTIPNFI. Residues 432 to 466 show a composition bias toward low complexity; that stretch reads EDGNNNNNKNKNNNNNNNNRIENENGAENSSENGS. A helical membrane pass occupies residues 539–559; sequence LGLGDFVFYSVLIGKAASYQI. The active site involves Asp-543. Residues 560–562 lie on the Lumenal side of the membrane; that stretch reads TTV. The chain crosses the membrane as a helical span at residues 563-583; it reads FTVFIAIITGLFLTLILLAVF. Over 584–588 the chain is Cytoplasmic; that stretch reads RRALP. Residues 588 to 590 carry the PAL motif; sequence PAL. The segment at residues 589–609 is an intramembrane region (helical); the sequence is ALPMSIIFGIIVFFLTFKILI. Topologically, residues 610–622 are cytoplasmic; the sequence is QYIYFLGENQIFV.

Belongs to the peptidase A22A family. Homodimer. Component of the gamma-secretase complex, a complex composed of a presenilin homodimer, nicastrin, aph1 and pen2.

It is found in the endoplasmic reticulum membrane. The protein resides in the golgi apparatus membrane. Its function is as follows. Probable catalytic subunit of the gamma-secretase complex, an endoprotease complex that catalyzes the intramembrane cleavage of integral membrane proteins such as Notch receptors. Requires the other members of the gamma-secretase complex to have a protease activity. The protein is Presenilin-A (psenA) of Dictyostelium discoideum (Social amoeba).